Consider the following 442-residue polypeptide: Protein UNUSUAL FLORAL ORGANS (442 aa).

Positions 1-85 are interaction with SKP1A; sequence MDSTVFINNP…RFYSLLFSNT (85 aa). Residues 44-90 form the F-box domain; the sequence is GRIWSKLPPPLLDRVIAFLPPPAFFRTRCVCKRFYSLLFSNTFLETY.

In terms of assembly, part of a putative SCF (ASK/Cullin/F-box) ubiquitin ligase complex. Interacts with SKP1A/ASK1, SKP1B/ASK2 and ASK11.

Its subcellular location is the nucleus. It functions in the pathway protein modification; protein ubiquitination. Functionally, component of SCF(ASK-cullin-F-box) E3 ubiquitin ligase complexes, which may mediate the ubiquitination and subsequent proteasomal degradation of target proteins. Considered as a meristem identity factor required for normal growth of the young floral meristem. Acts together with LEAFY to positively regulate the B class floral homeotic genes APETALA3 and PISTILLATA. In this way, operates as a region-specific regulator for petal and stamen development. Alternatively, may play a role as a negative regulator of the C class floral homeotic genes. Interacts together with the SKP1-like protein ASK1 to form a ubiquitin E3 ligase complex and could indirectly promote the ubiquitination and degradation of specific proteins controlling the floral primordia development like repressors of B class floral homeotic genes. The polypeptide is Protein UNUSUAL FLORAL ORGANS (UFO) (Arabidopsis thaliana (Mouse-ear cress)).